The chain runs to 619 residues: MAIQLLPPQLANQIAAGEVVERPASVVKELVENSLDAGATRVDIDIDKGGSKLIRIRDNGAGIAKDELALALSRHATSKVHTLDDLEAILSFGFRGEALASISSVSRLTLTSKTAEQSEAWQAYAEGSQMDVKVTPAAHPQGSTIEVVDLFFNTPARRRFLKSDKTEFTHIDEWLKRIAIVRSDIHFTLTHNAKLVRQYRPANTDIQTQQRLAQICGRAFADQALSIACEHDDFVLTGYLQSPQDTVITDTNFFYVNGRLIRDRLVNHAVKQAFAEYGIEHQPGYVLMLSLDPHQVDVNVHPAKHEVRFHQSRYVHDFILQAVRSALVEMPALPLSDELEHHDNVAPMHTESNLMHDVKVVDTAEDEFTLNHGSSKAINSVSQFGSMHVPGKNNGLSGGYSAAIKPSYDKKPSSASSAQTKTAIANYGQLLHTPMNSAVSYVHEAAPQVTMPPLLAGEHWVICKDDKLSLLPIKSVLLAVRKKDVETKLANGLVSQPLLMPVSIAADLDWIETLAVRDQLLRQMGIELTIRFQQLIIKKVPPYLRECQLAIVIPELLQWIQLEQPTQSAIVGWLAQQSLSQFEPAQALWLQFCSLDDETQQTCYAQERIIPWQNWMKDN.

It belongs to the DNA mismatch repair MutL/HexB family.

Its function is as follows. This protein is involved in the repair of mismatches in DNA. It is required for dam-dependent methyl-directed DNA mismatch repair. May act as a 'molecular matchmaker', a protein that promotes the formation of a stable complex between two or more DNA-binding proteins in an ATP-dependent manner without itself being part of a final effector complex. The sequence is that of DNA mismatch repair protein MutL from Shewanella frigidimarina (strain NCIMB 400).